The primary structure comprises 160 residues: 6,7-dimethyl-8-ribityllumazine synthase (160 aa).

Residues tryptophan 27, 59–61 (AIE), and 81–83 (VVI) each bind 5-amino-6-(D-ribitylamino)uracil. A (2S)-2-hydroxy-3-oxobutyl phosphate-binding site is contributed by 86–87 (QT). Residue histidine 89 is the Proton donor of the active site. Asparagine 114 is a binding site for 5-amino-6-(D-ribitylamino)uracil. A (2S)-2-hydroxy-3-oxobutyl phosphate-binding site is contributed by arginine 128.

Belongs to the DMRL synthase family. In terms of assembly, homopentamer.

It catalyses the reaction (2S)-2-hydroxy-3-oxobutyl phosphate + 5-amino-6-(D-ribitylamino)uracil = 6,7-dimethyl-8-(1-D-ribityl)lumazine + phosphate + 2 H2O + H(+). Its pathway is cofactor biosynthesis; riboflavin biosynthesis; riboflavin from 2-hydroxy-3-oxobutyl phosphate and 5-amino-6-(D-ribitylamino)uracil: step 1/2. In terms of biological role, catalyzes the formation of 6,7-dimethyl-8-ribityllumazine by condensation of 5-amino-6-(D-ribitylamino)uracil with 3,4-dihydroxy-2-butanone 4-phosphate. This is the penultimate step in the biosynthesis of riboflavin. The polypeptide is 6,7-dimethyl-8-ribityllumazine synthase (Mycobacterium avium (strain 104)).